Here is a 31-residue protein sequence, read N- to C-terminus: Photosystem II reaction center protein T (31 aa).

The helical transmembrane segment at 3-23 threads the bilayer; the sequence is SVAYILILTMALAVLFFAIAF.

It belongs to the PsbT family. PSII is composed of 1 copy each of membrane proteins PsbA, PsbB, PsbC, PsbD, PsbE, PsbF, PsbH, PsbI, PsbJ, PsbK, PsbL, PsbM, PsbT, PsbX, PsbY, PsbZ, Psb30/Ycf12, peripheral proteins PsbO, CyanoQ (PsbQ), PsbU, PsbV and a large number of cofactors. It forms dimeric complexes.

The protein localises to the cellular thylakoid membrane. Found at the monomer-monomer interface of the photosystem II (PS II) dimer, plays a role in assembly and dimerization of PSII. PSII is a light-driven water plastoquinone oxidoreductase, using light energy to abstract electrons from H(2)O, generating a proton gradient subsequently used for ATP formation. This Gloeothece citriformis (strain PCC 7424) (Cyanothece sp. (strain PCC 7424)) protein is Photosystem II reaction center protein T.